The primary structure comprises 393 residues: Riboflavin biosynthesis protein RibBA (393 aa).

The DHBP synthase stretch occupies residues 1–200; it reads MQFDNIDSAL…IDDLIEYRKK (200 aa). D-ribulose 5-phosphate contacts are provided by residues 27-28, D32, 139-143, and E163; these read RE and RNGHT. E28 is a binding site for Mg(2+). Position 142 (H142) interacts with Mg(2+). The interval 201 to 393 is GTP cyclohydrolase II; sequence LEPEIEFKAK…TKKIKMGHLI (193 aa). A GTP-binding site is contributed by 249 to 253; the sequence is RLHSA. Zn(2+) is bound by residues C254, C265, and C267. Residues Q270, 291 to 293, and T313 contribute to the GTP site; that span reads EGR. The active-site Proton acceptor; for GTP cyclohydrolase activity is the D325. R327 functions as the Nucleophile; for GTP cyclohydrolase activity in the catalytic mechanism. S348 and K353 together coordinate GTP.

The protein in the N-terminal section; belongs to the DHBP synthase family. This sequence in the C-terminal section; belongs to the GTP cyclohydrolase II family. The cofactor is Mg(2+). Mn(2+) is required as a cofactor. It depends on Zn(2+) as a cofactor.

It carries out the reaction D-ribulose 5-phosphate = (2S)-2-hydroxy-3-oxobutyl phosphate + formate + H(+). The enzyme catalyses GTP + 4 H2O = 2,5-diamino-6-hydroxy-4-(5-phosphoribosylamino)-pyrimidine + formate + 2 phosphate + 3 H(+). The protein operates within cofactor biosynthesis; riboflavin biosynthesis; 2-hydroxy-3-oxobutyl phosphate from D-ribulose 5-phosphate: step 1/1. It participates in cofactor biosynthesis; riboflavin biosynthesis; 5-amino-6-(D-ribitylamino)uracil from GTP: step 1/4. Its function is as follows. Catalyzes the conversion of D-ribulose 5-phosphate to formate and 3,4-dihydroxy-2-butanone 4-phosphate. Functionally, catalyzes the conversion of GTP to 2,5-diamino-6-ribosylamino-4(3H)-pyrimidinone 5'-phosphate (DARP), formate and pyrophosphate. The polypeptide is Riboflavin biosynthesis protein RibBA (Staphylococcus aureus (strain Mu50 / ATCC 700699)).